A 217-amino-acid polypeptide reads, in one-letter code: Probable GTP-binding protein EngB (217 aa).

Residues 29 to 213 (GPLEVAFAGR…RQAIAETVGI (185 aa)) form the EngB-type G domain. GTP is bound by residues 37-44 (GRSNVGKS), 64-68 (GRTQE), 91-94 (DMPG), 158-161 (TKTD), and 192-194 (TSS). Mg(2+)-binding residues include S44 and T66.

It belongs to the TRAFAC class TrmE-Era-EngA-EngB-Septin-like GTPase superfamily. EngB GTPase family. Mg(2+) is required as a cofactor.

In terms of biological role, necessary for normal cell division and for the maintenance of normal septation. The protein is Probable GTP-binding protein EngB of Rhizobium johnstonii (strain DSM 114642 / LMG 32736 / 3841) (Rhizobium leguminosarum bv. viciae).